Reading from the N-terminus, the 844-residue chain is Nitrogen permease regulator 3 (844 aa).

The signal sequence occupies residues 1 to 21 (MSTNLPNSCLVQIALTVSTHS). Disordered regions lie at residues 53-113 (EYTD…TFIN) and 246-310 (GRWK…DYEP). Positions 57–94 (SENNSSSDDYSSGLSDSELSTDYADCSSDASESSLDSL) are enriched in low complexity. The span at 103 to 113 (VNSSTNNTFIN) shows a compositional bias: polar residues. Residues 246-262 (GRWKKSKKRKQASKRSA) are compositionally biased toward basic residues. The span at 263–273 (RSSTARNSISR) shows a compositional bias: low complexity. The span at 274–293 (NSVGRNSIGRNRSKTESQGH) shows a compositional bias: polar residues. The segment covering 297–307 (VEEPADDENSD) has biased composition (acidic residues).

Belongs to the NPR3 family.

Its function is as follows. Mediates inactivation of the TORC1 complex in response to amino acid starvation. Required for meiotic nuclear division. This is Nitrogen permease regulator 3 (NPR3) from Kluyveromyces lactis (strain ATCC 8585 / CBS 2359 / DSM 70799 / NBRC 1267 / NRRL Y-1140 / WM37) (Yeast).